A 617-amino-acid chain; its full sequence is 1-deoxy-D-xylulose-5-phosphate synthase (617 aa).

Residues His-76 and 117–119 (GHS) contribute to the thiamine diphosphate site. Asp-148 provides a ligand contact to Mg(2+). Thiamine diphosphate-binding positions include 149–150 (GA), Asn-177, Tyr-285, and Glu-366. Asn-177 serves as a coordination point for Mg(2+).

It belongs to the transketolase family. DXPS subfamily. Homodimer. Mg(2+) is required as a cofactor. It depends on thiamine diphosphate as a cofactor.

It carries out the reaction D-glyceraldehyde 3-phosphate + pyruvate + H(+) = 1-deoxy-D-xylulose 5-phosphate + CO2. The protein operates within metabolic intermediate biosynthesis; 1-deoxy-D-xylulose 5-phosphate biosynthesis; 1-deoxy-D-xylulose 5-phosphate from D-glyceraldehyde 3-phosphate and pyruvate: step 1/1. Functionally, catalyzes the acyloin condensation reaction between C atoms 2 and 3 of pyruvate and glyceraldehyde 3-phosphate to yield 1-deoxy-D-xylulose-5-phosphate (DXP). The polypeptide is 1-deoxy-D-xylulose-5-phosphate synthase (Histophilus somni (strain 129Pt) (Haemophilus somnus)).